A 156-amino-acid chain; its full sequence is Small ribosomal subunit protein uS7 (156 aa).

Belongs to the universal ribosomal protein uS7 family. Part of the 30S ribosomal subunit. Contacts proteins S9 and S11.

One of the primary rRNA binding proteins, it binds directly to 16S rRNA where it nucleates assembly of the head domain of the 30S subunit. Is located at the subunit interface close to the decoding center, probably blocks exit of the E-site tRNA. This chain is Small ribosomal subunit protein uS7, found in Clostridium kluyveri (strain NBRC 12016).